The primary structure comprises 70 residues: uncharacterized protein (70 aa).

This is an uncharacterized protein from Methanocaldococcus jannaschii (strain ATCC 43067 / DSM 2661 / JAL-1 / JCM 10045 / NBRC 100440) (Methanococcus jannaschii).